Reading from the N-terminus, the 388-residue chain is Interferon alpha/beta receptor 1b (388 aa).

Fibronectin type-III domains are found at residues L5–D102 and P109–D211. Residues I217 to Y237 traverse the membrane as a helical segment. A disordered region spans residues T308–S357. Positions D317 to S326 are enriched in basic and acidic residues. The span at I331 to G342 shows a compositional bias: polar residues.

This sequence belongs to the type II cytokine receptor family. Heterodimer with IFNAR2; forming the receptor for type I interferon.

It is found in the cell membrane. The protein resides in the cytoplasm. It localises to the perinuclear region. In terms of biological role, together with IFNAR2, forms the heterodimeric receptor for type I interferons (including interferons alpha, beta, epsilon, omega and kappa). Type I interferon binding activates the JAK-STAT signaling cascade, resulting in transcriptional activation or repression of interferon-regulated genes that encode the effectors of the interferon response. Mechanistically, type I interferon-binding brings the IFNAR1 and IFNAR2 subunits into close proximity with one another, driving their associated Janus kinases (JAKs) (TYK2 bound to IFNAR1 and JAK1 bound to IFNAR2) to cross-phosphorylate one another. The activated kinases phosphorylate specific tyrosine residues on the intracellular domains of IFNAR1 and IFNAR2, forming docking sites for the STAT transcription factors. STAT proteins are then phosphorylated by the JAKs, promoting their translocation into the nucleus to regulate expression of interferon-regulated genes. This Oncorhynchus mykiss (Rainbow trout) protein is Interferon alpha/beta receptor 1b.